Consider the following 466-residue polypeptide: Ribulose bisphosphate carboxylase large chain (466 aa).

An N6,N6,N6-trimethyllysine modification is found at K5. Substrate-binding residues include N114 and T164. K166 functions as the Proton acceptor in the catalytic mechanism. K168 provides a ligand contact to substrate. K192, D194, and E195 together coordinate Mg(2+). Residue K192 is modified to N6-carboxylysine. The active-site Proton acceptor is the H285. Substrate-binding residues include R286, H318, and S370.

It belongs to the RuBisCO large chain family. Type I subfamily. As to quaternary structure, heterohexadecamer of 8 large chains and 8 small chains; disulfide-linked. The disulfide link is formed within the large subunit homodimers. Requires Mg(2+) as cofactor. The disulfide bond which can form in the large chain dimeric partners within the hexadecamer appears to be associated with oxidative stress and protein turnover.

The protein localises to the plastid. It is found in the chloroplast. It carries out the reaction 2 (2R)-3-phosphoglycerate + 2 H(+) = D-ribulose 1,5-bisphosphate + CO2 + H2O. The enzyme catalyses D-ribulose 1,5-bisphosphate + O2 = 2-phosphoglycolate + (2R)-3-phosphoglycerate + 2 H(+). Functionally, ruBisCO catalyzes two reactions: the carboxylation of D-ribulose 1,5-bisphosphate, the primary event in carbon dioxide fixation, as well as the oxidative fragmentation of the pentose substrate in the photorespiration process. Both reactions occur simultaneously and in competition at the same active site. The sequence is that of Ribulose bisphosphate carboxylase large chain from Berzelia lanuginosa (Buttonbush).